The primary structure comprises 301 residues: Structure-specific endonuclease subunit SLX1 (301 aa).

The 84-residue stretch at 12–95 (AFYCCYLLRS…QHPYQTRFIK (84 aa)) folds into the GIY-YIG domain. The segment at 216-283 (CAICEKIVDY…IPTSGQCPNC (68 aa)) adopts an SLX1-type zinc-finger fold.

The protein belongs to the SLX1 family. As to quaternary structure, forms a heterodimer with SLX4. The cofactor is a divalent metal cation.

The protein localises to the nucleus. Functionally, catalytic subunit of the SLX1-SLX4 structure-specific endonuclease that resolves DNA secondary structures generated during DNA repair and recombination. Has endonuclease activity towards branched DNA substrates, introducing single-strand cuts in duplex DNA close to junctions with ss-DNA. This Eremothecium gossypii (strain ATCC 10895 / CBS 109.51 / FGSC 9923 / NRRL Y-1056) (Yeast) protein is Structure-specific endonuclease subunit SLX1.